We begin with the raw amino-acid sequence, 840 residues long: MSVVGIDLGFQSCYVAVARAGGIETIANEYSDRCTPACISFGPKNRSIGAAAKSQVISNAKNTVQGFKRFHGRAFSDPFVEAEKSNLAYDVVQLPTGLTGIKVTYMEEERNFTTEQVTAMLLSKLKETAESVLKKPVVDCVVSVPCFYTDAERRSVMDATQIAGLNCLRLMNETTAVALAYGIYKQDLPALEEKPRNVVFVDMGHSAYQVSVCAFNRGKLKVLATAFDTTLGGRKFDEVLVNHFCEEFGKKYKLDIKSKIRALLRLSQECEKLKKLMSANASDLPLSIECFMNDVDVSGTMNRGKFLEMCNDLLARVEPPLRSVLEQTKLKKEDIYAVEIVGGATRIPAVKEKISKFFGKELSTTLNADEAVTRGCALQCAILSPAFKVREFSITDVVPYPISLRWNSPAEEGSSDCEVFSKNHAAPFSKVLTFYRKEPFTLEAYYSSPQDLPYPDPAIAQFSVQKVTPQSDGSSSKVKVKVRVNVHGIFSVSSASLVEVHKSEENEEPMETDQNAKEEEKMQVDQEEPHVEEQQQQTPAENKAESEEMETSQAGSKDKKMDQPPQAKKAKVKTSTVDLPIENQLLWQIDREMLNLYIENEGKMIMQDKLEKERNDAKNAVEEYVYEMRDKLSGEYEKFVSEDDRNSFTLKLEDTENWLYEDGEDQPKQVYVDKLAELKNLGQPIKIRFQESEERPKLFEELGKQIQQYMKIISSFKNKEDQYDHLDAADMTKVEKSTNEAMEWMNNKLNLQNKQSLTMDPVVKSKEIEAKIKELTSICSPIISKPKPKVEPPKEEQKNAEQNGPVDGQGDNPGPQAAEQGTDAAVPSDSDKKLPEMDID.

Lys53 is subject to N6-acetyllysine. Phosphoserine is present on Ser76. Phosphotyrosine occurs at positions 89 and 336. Residues Ser393 and Ser415 each carry the phosphoserine modification. Lys430 bears the N6-acetyllysine mark. Residues 500–575 (VHKSEENEEP…QAKKAKVKTS (76 aa)) form a disordered region. A compositionally biased stretch (basic and acidic residues) spans 514–533 (QNAKEEEKMQVDQEEPHVEE). Thr538 carries the post-translational modification Phosphothreonine. Ser546 and Ser647 each carry phosphoserine. Tyr660 bears the Phosphotyrosine mark. Lys679 is subject to N6-acetyllysine. Ser756 carries the post-translational modification Phosphoserine. Lys773 is modified (N6-methyllysine). Residues 783-840 (ISKPKPKVEPPKEEQKNAEQNGPVDGQGDNPGPQAAEQGTDAAVPSDSDKKLPEMDID) form a disordered region. 2 stretches are compositionally biased toward basic and acidic residues: residues 788-799 (PKVEPPKEEQKN) and 829-840 (DSDKKLPEMDID).

Belongs to the heat shock protein 70 family. Interacts with TJP1/ZO-1.

The protein resides in the cytoplasm. This Pongo abelii (Sumatran orangutan) protein is Heat shock 70 kDa protein 4 (HSPA4).